We begin with the raw amino-acid sequence, 958 residues long: Glycine dehydrogenase (decarboxylating) (958 aa).

At Lys708 the chain carries N6-(pyridoxal phosphate)lysine.

Belongs to the GcvP family. The glycine cleavage system is composed of four proteins: P, T, L and H. The cofactor is pyridoxal 5'-phosphate.

The enzyme catalyses N(6)-[(R)-lipoyl]-L-lysyl-[glycine-cleavage complex H protein] + glycine + H(+) = N(6)-[(R)-S(8)-aminomethyldihydrolipoyl]-L-lysyl-[glycine-cleavage complex H protein] + CO2. The glycine cleavage system catalyzes the degradation of glycine. The P protein binds the alpha-amino group of glycine through its pyridoxal phosphate cofactor; CO(2) is released and the remaining methylamine moiety is then transferred to the lipoamide cofactor of the H protein. This Proteus mirabilis (strain HI4320) protein is Glycine dehydrogenase (decarboxylating).